We begin with the raw amino-acid sequence, 236 residues long: MYQLGDVKKIVLPGDPVEVQGKIRNGIYRGPDNKYYSEYFGTLQVSDQYVDVVPFSGQYIPRKGDKVIGKIIEVGPSTWTVDINSPYFAMLHMNDTPWRISSGDLKRYLNSGDYVYAKIMSVNEIKESWLTLKEPGLKKLEGGHMVLIHASRVPRVIGKGGGMVNMVKELTSTRIIIGQNGLIWIDGPIEGVTMAIAAIEMIEREAHTEGLTVRVESFLKELRGDKDGNQQDKANQ.

Residues 64–133 (GDKVIGKIIE…EIKESWLTLK (70 aa)) form the S1 motif domain. Residues 141–199 (EGGHMVLIHASRVPRVIGKGGGMVNMVKELTSTRIIIGQNGLIWIDGPIEGVTMAIAAI) enclose the KH domain.

It belongs to the RRP4 family. In terms of assembly, component of the archaeal exosome complex. Forms a trimer of Rrp4 and/or Csl4 subunits. The trimer associates with a hexameric ring-like arrangement composed of 3 Rrp41-Rrp42 heterodimers.

Its subcellular location is the cytoplasm. In terms of biological role, non-catalytic component of the exosome, which is a complex involved in RNA degradation. Increases the RNA binding and the efficiency of RNA degradation. Confers strong poly(A) specificity to the exosome. The polypeptide is Exosome complex component Rrp4 (Thermoplasma volcanium (strain ATCC 51530 / DSM 4299 / JCM 9571 / NBRC 15438 / GSS1)).